Reading from the N-terminus, the 582-residue chain is ATP-dependent lipid A-core flippase (582 aa).

5 helical membrane-spanning segments follow: residues 16–36 (LWPT…ALIL), 63–83 (VLVW…ITSY), 153–173 (IIGL…ILIV), 253–273 (PIIQ…ASFP), and 275–295 (VMDN…IALM). One can recognise an ABC transmembrane type-1 domain in the interval 28-310 (IVAGVALILN…LTNVNAQFQR (283 aa)). The ABC transporter domain maps to 342 to 578 (VEFRNVTFTY…RGVYAQLHKM (237 aa)). Residue 376–383 (GRSGSGKS) coordinates ATP.

It belongs to the ABC transporter superfamily. Lipid exporter (TC 3.A.1.106) family. In terms of assembly, homodimer.

The protein localises to the cell inner membrane. The catalysed reaction is ATP + H2O + lipid A-core oligosaccharideSide 1 = ADP + phosphate + lipid A-core oligosaccharideSide 2.. Functionally, involved in lipopolysaccharide (LPS) biosynthesis. Translocates lipid A-core from the inner to the outer leaflet of the inner membrane. Transmembrane domains (TMD) form a pore in the inner membrane and the ATP-binding domain (NBD) is responsible for energy generation. The polypeptide is ATP-dependent lipid A-core flippase (Shigella sonnei (strain Ss046)).